The sequence spans 156 residues: Lipoprotein signal peptidase (156 aa).

4 consecutive transmembrane segments (helical) span residues isoleucine 8–leucine 28, valine 39–serine 59, tyrosine 67–phenylalanine 87, and serine 99–isoleucine 119. Active-site residues include aspartate 120 and aspartate 138. Residues tryptophan 129–isoleucine 149 traverse the membrane as a helical segment.

It belongs to the peptidase A8 family.

It is found in the cell inner membrane. The catalysed reaction is Release of signal peptides from bacterial membrane prolipoproteins. Hydrolyzes -Xaa-Yaa-Zaa-|-(S,diacylglyceryl)Cys-, in which Xaa is hydrophobic (preferably Leu), and Yaa (Ala or Ser) and Zaa (Gly or Ala) have small, neutral side chains.. Its pathway is protein modification; lipoprotein biosynthesis (signal peptide cleavage). Its function is as follows. This protein specifically catalyzes the removal of signal peptides from prolipoproteins. This Buchnera aphidicola subsp. Schizaphis graminum (strain Sg) protein is Lipoprotein signal peptidase.